The sequence spans 137 residues: Large-conductance mechanosensitive channel (137 aa).

Residues 1-16 are Cytoplasmic-facing; it reads MSIIKEFREFAMRGNV. The chain crosses the membrane as a helical span at residues 17-45; it reads VDLAVGVIIGALFGKIVSSLVSDIIMPPL. Over 46–74 the chain is Periplasmic; it reads GLLIGGVDFKQFALFLRNAQGGIPAVVMN. The chain crosses the membrane as a helical span at residues 75–94; it reads YGAFIQNIFDFIIVAFAIFI. The Cytoplasmic segment spans residues 95–137; it reads AIKLMNKMRCKQEDTPAAPPKPSAEEKLLAEIRDLLKEQQTRQ.

The protein belongs to the MscL family. In terms of assembly, homopentamer.

It localises to the cell inner membrane. Its function is as follows. Channel that opens in response to stretch forces in the membrane lipid bilayer. Forms a nonselective ion channel with a conductance of about 4 nanosiemens. May participate in the regulation of osmotic pressure changes within the cell. This Pectobacterium carotovorum (Erwinia carotovora) protein is Large-conductance mechanosensitive channel.